A 165-amino-acid chain; its full sequence is 6,7-dimethyl-8-ribityllumazine synthase (165 aa).

5-amino-6-(D-ribitylamino)uracil-binding positions include Y30, 61–63, and 90–92; these read ALE and VVI. (2S)-2-hydroxy-3-oxobutyl phosphate is bound at residue 95–96; sequence ET. Catalysis depends on H98, which acts as the Proton donor. N123 is a binding site for 5-amino-6-(D-ribitylamino)uracil. (2S)-2-hydroxy-3-oxobutyl phosphate is bound at residue R137.

The protein belongs to the DMRL synthase family.

The enzyme catalyses (2S)-2-hydroxy-3-oxobutyl phosphate + 5-amino-6-(D-ribitylamino)uracil = 6,7-dimethyl-8-(1-D-ribityl)lumazine + phosphate + 2 H2O + H(+). The protein operates within cofactor biosynthesis; riboflavin biosynthesis; riboflavin from 2-hydroxy-3-oxobutyl phosphate and 5-amino-6-(D-ribitylamino)uracil: step 1/2. Catalyzes the formation of 6,7-dimethyl-8-ribityllumazine by condensation of 5-amino-6-(D-ribitylamino)uracil with 3,4-dihydroxy-2-butanone 4-phosphate. This is the penultimate step in the biosynthesis of riboflavin. This chain is 6,7-dimethyl-8-ribityllumazine synthase, found in Xanthobacter autotrophicus (strain ATCC BAA-1158 / Py2).